The chain runs to 132 residues: Small ribosomal subunit protein uS8 (132 aa).

It belongs to the universal ribosomal protein uS8 family. As to quaternary structure, part of the 30S ribosomal subunit. Contacts proteins S5 and S12.

One of the primary rRNA binding proteins, it binds directly to 16S rRNA central domain where it helps coordinate assembly of the platform of the 30S subunit. The polypeptide is Small ribosomal subunit protein uS8 (Mycolicibacterium vanbaalenii (strain DSM 7251 / JCM 13017 / BCRC 16820 / KCTC 9966 / NRRL B-24157 / PYR-1) (Mycobacterium vanbaalenii)).